Here is an 88-residue protein sequence, read N- to C-terminus: Small ribosomal subunit protein bS20 (88 aa).

The segment at 1-27 is disordered; it reads MANSKSAKKRALQSEKRRQHNASRRSM.

This sequence belongs to the bacterial ribosomal protein bS20 family.

Binds directly to 16S ribosomal RNA. The chain is Small ribosomal subunit protein bS20 from Shewanella woodyi (strain ATCC 51908 / MS32).